Consider the following 433-residue polypeptide: Homogentisate 1,2-dioxygenase (433 aa).

The Proton acceptor role is filled by His288. Fe cation-binding residues include His331 and Glu337. Homogentisate contacts are provided by Tyr346 and His367. His367 serves as a coordination point for Fe cation.

It belongs to the homogentisate dioxygenase family. As to quaternary structure, hexamer; dimer of trimers. Requires Fe cation as cofactor.

The catalysed reaction is homogentisate + O2 = 4-maleylacetoacetate + H(+). Its pathway is amino-acid degradation; L-phenylalanine degradation; acetoacetate and fumarate from L-phenylalanine: step 4/6. Functionally, involved in the catabolism of homogentisate (2,5-dihydroxyphenylacetate or 2,5-OH-PhAc), a central intermediate in the degradation of phenylalanine and tyrosine. Catalyzes the oxidative ring cleavage of the aromatic ring of homogentisate to yield maleylacetoacetate. This chain is Homogentisate 1,2-dioxygenase, found in Pseudomonas putida (strain W619).